Here is a 188-residue protein sequence, read N- to C-terminus: MQNETKPLCGIDEAGRGPLAGALVMAGVVLKKPIDGLMDSKKLTEKRREALYTIVLENAEYHIVSFSAKEVDDLGISKCLQKGLQSIQNALDGCKYLFDGNSTFGVDNVSTMVKADDKVPEVSAASILAKVTRDREMIKMAEIYPEYGFEKHKGYGTKAHIEALMKYDRCEIHRRSFRVKGLDEPTLF.

The 183-residue stretch at 6-188 (KPLCGIDEAG…VKGLDEPTLF (183 aa)) folds into the RNase H type-2 domain. A divalent metal cation is bound by residues Asp-12, Glu-13, and Asp-99.

The protein belongs to the RNase HII family. Requires Mn(2+) as cofactor. The cofactor is Mg(2+).

Its subcellular location is the cytoplasm. The enzyme catalyses Endonucleolytic cleavage to 5'-phosphomonoester.. Functionally, endonuclease that specifically degrades the RNA of RNA-DNA hybrids. The polypeptide is Ribonuclease HII (Sulfurovum sp. (strain NBC37-1)).